Reading from the N-terminus, the 344-residue chain is Protein-arginine kinase (344 aa).

Residues 14–244 (IVLSSRIRLA…KQIIQQERLA (231 aa)) form the Phosphagen kinase C-terminal domain. Residues 17 to 21 (SSRIR), His81, Arg115, 166 to 170 (RASAM), and 197 to 202 (RGLYGE) each bind ATP.

This sequence belongs to the ATP:guanido phosphotransferase family.

It carries out the reaction L-arginyl-[protein] + ATP = N(omega)-phospho-L-arginyl-[protein] + ADP + H(+). Catalyzes the specific phosphorylation of arginine residues in proteins. The sequence is that of Protein-arginine kinase from Clostridium novyi (strain NT).